Consider the following 452-residue polypeptide: Pup--protein ligase (452 aa).

Glu9 serves as a coordination point for Mg(2+). Position 53 (Arg53) interacts with ATP. Tyr55 is a binding site for Mg(2+). The Proton acceptor role is filled by Asp57. A Mg(2+)-binding site is contributed by Glu63. Residues Thr66 and Trp419 each coordinate ATP.

It belongs to the Pup ligase/Pup deamidase family. Pup-conjugating enzyme subfamily.

It catalyses the reaction ATP + [prokaryotic ubiquitin-like protein]-L-glutamate + [protein]-L-lysine = ADP + phosphate + N(6)-([prokaryotic ubiquitin-like protein]-gamma-L-glutamyl)-[protein]-L-lysine.. It participates in protein degradation; proteasomal Pup-dependent pathway. It functions in the pathway protein modification; protein pupylation. Catalyzes the covalent attachment of the prokaryotic ubiquitin-like protein modifier Pup to the proteasomal substrate proteins, thereby targeting them for proteasomal degradation. This tagging system is termed pupylation. The ligation reaction involves the side-chain carboxylate of the C-terminal glutamate of Pup and the side-chain amino group of a substrate lysine. This chain is Pup--protein ligase, found in Gordonia bronchialis (strain ATCC 25592 / DSM 43247 / BCRC 13721 / JCM 3198 / KCTC 3076 / NBRC 16047 / NCTC 10667) (Rhodococcus bronchialis).